The chain runs to 230 residues: Protein-L-isoaspartate O-methyltransferase (230 aa).

S65 is an active-site residue.

This sequence belongs to the methyltransferase superfamily. L-isoaspartyl/D-aspartyl protein methyltransferase family. Monomer. Highest contents in seeds.

It is found in the cytoplasm. The enzyme catalyses [protein]-L-isoaspartate + S-adenosyl-L-methionine = [protein]-L-isoaspartate alpha-methyl ester + S-adenosyl-L-homocysteine. Catalyzes the methyl esterification of L-isoaspartyl residues in peptides and proteins that result from spontaneous decomposition of normal L-aspartyl and L-asparaginyl residues. It plays a role in the repair and/or degradation of damaged proteins. This enzyme does not act on D-aspartyl residues. The protein is Protein-L-isoaspartate O-methyltransferase (PCM) of Triticum aestivum (Wheat).